The primary structure comprises 315 residues: Porphobilinogen deaminase (315 aa).

C242 carries the S-(dipyrrolylmethanemethyl)cysteine modification.

Belongs to the HMBS family. As to quaternary structure, monomer. The cofactor is dipyrromethane.

It carries out the reaction 4 porphobilinogen + H2O = hydroxymethylbilane + 4 NH4(+). It functions in the pathway porphyrin-containing compound metabolism; protoporphyrin-IX biosynthesis; coproporphyrinogen-III from 5-aminolevulinate: step 2/4. In terms of biological role, tetrapolymerization of the monopyrrole PBG into the hydroxymethylbilane pre-uroporphyrinogen in several discrete steps. The sequence is that of Porphobilinogen deaminase from Syntrophotalea carbinolica (strain DSM 2380 / NBRC 103641 / GraBd1) (Pelobacter carbinolicus).